The primary structure comprises 353 residues: Methylthioribose-1-phosphate isomerase (353 aa).

Catalysis depends on Asp241, which acts as the Proton donor.

The protein belongs to the eIF-2B alpha/beta/delta subunits family. MtnA subfamily.

It is found in the cytoplasm. The protein localises to the nucleus. The enzyme catalyses 5-(methylsulfanyl)-alpha-D-ribose 1-phosphate = 5-(methylsulfanyl)-D-ribulose 1-phosphate. Its pathway is amino-acid biosynthesis; L-methionine biosynthesis via salvage pathway; L-methionine from S-methyl-5-thio-alpha-D-ribose 1-phosphate: step 1/6. Its function is as follows. Catalyzes the interconversion of methylthioribose-1-phosphate (MTR-1-P) into methylthioribulose-1-phosphate (MTRu-1-P). This chain is Methylthioribose-1-phosphate isomerase (mri1), found in Danio rerio (Zebrafish).